The following is a 200-amino-acid chain: Small ribosomal subunit protein uS4 (200 aa).

A disordered region spans residues 22-43 (TGKELQKRPYPPGQHGPSQRRK). Residues 92 to 152 (SRLDNLVYRL…EKSRNLQVIK (61 aa)) form the S4 RNA-binding domain.

This sequence belongs to the universal ribosomal protein uS4 family. In terms of assembly, part of the 30S ribosomal subunit. Contacts protein S5. The interaction surface between S4 and S5 is involved in control of translational fidelity.

In terms of biological role, one of the primary rRNA binding proteins, it binds directly to 16S rRNA where it nucleates assembly of the body of the 30S subunit. Functionally, with S5 and S12 plays an important role in translational accuracy. This is Small ribosomal subunit protein uS4 from Geobacillus sp. (strain WCH70).